The sequence spans 520 residues: D-aminopeptidase (520 aa).

Ser62 functions as the Nucleophile in the catalytic mechanism. Lys65 acts as the Proton donor/acceptor in catalysis. Residues 477–487 form an important for specificity region; that stretch reads QRSMDAPSPGE. Position 481 (Asp481) interacts with substrate.

This sequence belongs to the peptidase S12 family. In terms of assembly, homodimer.

The enzyme catalyses Release of an N-terminal D-amino acid from a peptide, Xaa-|-Yaa-, in which Xaa is preferably D-Ala, D-Ser or D-Thr. D-amino acid amides and methyl esters also are hydrolyzed, as is glycine amide.. Inhibited by beta-lactam compounds such as 6-aminopenicillic acid, 7-aminocephalosporanic acid, benzylpenicillin and ampicillin. Inhibited by p-chloromercuribenzoate. Functionally, hydrolyzes N-terminal residues in D-amino acid-containing peptides. The polypeptide is D-aminopeptidase (Brucella anthropi (strain ATCC 49188 / DSM 6882 / CCUG 24695 / JCM 21032 / LMG 3331 / NBRC 15819 / NCTC 12168 / Alc 37) (Ochrobactrum anthropi)).